Consider the following 342-residue polypeptide: MEPNNSFRVDSEFRYTLFPIFYSIVFVLGVIANSYVLWVFARLYPSKKFNEIKIFMVNLTMADLLFLVTLPLWIVYYYNQGDWILPKFLCNLAGCFFFINTYCSVAFLAVITYNRFQAVTRPIKTAQATTRKRGFLLSLIIWVSIVGAASYFFVLDSTNSEPKKTGSGNITRCFEHYEKGSIPVLIIHIFLVFSFFLVFLIILFCNLVIIRTLLTQQVQMQRNAEVKRRALWMVCTVLAVFVICFVPHHLVQLPWTLAELGFQDTDFHQGINDAHQVTLCLLSTNCVLDPIIYCFLTKKFRKHLTEKLYSMRESRKCSRATSETGTEVVVQLKDAPIKSLKY.

At 1–16 (MEPNNSFRVDSEFRYT) the chain is on the extracellular side. N-linked (GlcNAc...) asparagine glycosylation is present at Asn-4. The chain crosses the membrane as a helical span at residues 17–38 (LFPIFYSIVFVLGVIANSYVLW). Residues 39–54 (VFARLYPSKKFNEIKI) are Cytoplasmic-facing. The helical transmembrane segment at 55–74 (FMVNLTMADLLFLVTLPLWI) threads the bilayer. The Extracellular segment spans residues 75–91 (VYYYNQGDWILPKFLCN). Cys-90 and Cys-173 are oxidised to a cystine. A helical transmembrane segment spans residues 92 to 113 (LAGCFFFINTYCSVAFLAVITY). Topologically, residues 114-133 (NRFQAVTRPIKTAQATTRKR) are cytoplasmic. The chain crosses the membrane as a helical span at residues 134 to 155 (GFLLSLIIWVSIVGAASYFFVL). The Extracellular segment spans residues 156 to 184 (DSTNSEPKKTGSGNITRCFEHYEKGSIPV). An N-linked (GlcNAc...) asparagine glycan is attached at Asn-169. Residues 185–205 (LIIHIFLVFSFFLVFLIILFC) traverse the membrane as a helical segment. Topologically, residues 206–233 (NLVIIRTLLTQQVQMQRNAEVKRRALWM) are cytoplasmic. Residues 234 to 254 (VCTVLAVFVICFVPHHLVQLP) form a helical membrane-spanning segment. Over 255–276 (WTLAELGFQDTDFHQGINDAHQ) the chain is Extracellular. Residues 277-296 (VTLCLLSTNCVLDPIIYCFL) form a helical membrane-spanning segment. The Cytoplasmic portion of the chain corresponds to 297 to 342 (TKKFRKHLTEKLYSMRESRKCSRATSETGTEVVVQLKDAPIKSLKY).

The protein belongs to the G-protein coupled receptor 1 family. In terms of assembly, interacts with ARRB1.

It is found in the cell membrane. Receptor for platelet activating factor, a chemotactic phospholipid mediator that possesses potent inflammatory, smooth-muscle contractile and hypotensive activity. Seems to mediate its action via a G protein that activates a phosphatidylinositol-calcium second messenger system. The sequence is that of Platelet-activating factor receptor from Capra hircus (Goat).